The sequence spans 153 residues: 6,7-dimethyl-8-ribityllumazine synthase (153 aa).

Residues phenylalanine 22, 56–58 (AFE), and 80–82 (AVI) contribute to the 5-amino-6-(D-ribitylamino)uracil site. 85–86 (AT) contributes to the (2S)-2-hydroxy-3-oxobutyl phosphate binding site. Histidine 88 functions as the Proton donor in the catalytic mechanism. Phenylalanine 113 is a 5-amino-6-(D-ribitylamino)uracil binding site. Residue arginine 127 coordinates (2S)-2-hydroxy-3-oxobutyl phosphate.

Belongs to the DMRL synthase family.

It catalyses the reaction (2S)-2-hydroxy-3-oxobutyl phosphate + 5-amino-6-(D-ribitylamino)uracil = 6,7-dimethyl-8-(1-D-ribityl)lumazine + phosphate + 2 H2O + H(+). Its pathway is cofactor biosynthesis; riboflavin biosynthesis; riboflavin from 2-hydroxy-3-oxobutyl phosphate and 5-amino-6-(D-ribitylamino)uracil: step 1/2. Catalyzes the formation of 6,7-dimethyl-8-ribityllumazine by condensation of 5-amino-6-(D-ribitylamino)uracil with 3,4-dihydroxy-2-butanone 4-phosphate. This is the penultimate step in the biosynthesis of riboflavin. This is 6,7-dimethyl-8-ribityllumazine synthase from Alkaliphilus metalliredigens (strain QYMF).